Consider the following 277-residue polypeptide: 4-hydroxy-tetrahydrodipicolinate reductase (277 aa).

NAD(+) contacts are provided by residues 11-16 and 110-112; these read GALGRM and GTT. Residue histidine 166 is the Proton donor/acceptor of the active site. Residue histidine 167 coordinates (S)-2,3,4,5-tetrahydrodipicolinate. The Proton donor role is filled by lysine 170. 176-177 contacts (S)-2,3,4,5-tetrahydrodipicolinate; sequence GT.

Belongs to the DapB family.

It is found in the cytoplasm. It carries out the reaction (S)-2,3,4,5-tetrahydrodipicolinate + NAD(+) + H2O = (2S,4S)-4-hydroxy-2,3,4,5-tetrahydrodipicolinate + NADH + H(+). It catalyses the reaction (S)-2,3,4,5-tetrahydrodipicolinate + NADP(+) + H2O = (2S,4S)-4-hydroxy-2,3,4,5-tetrahydrodipicolinate + NADPH + H(+). It participates in amino-acid biosynthesis; L-lysine biosynthesis via DAP pathway; (S)-tetrahydrodipicolinate from L-aspartate: step 4/4. In terms of biological role, catalyzes the conversion of 4-hydroxy-tetrahydrodipicolinate (HTPA) to tetrahydrodipicolinate. The sequence is that of 4-hydroxy-tetrahydrodipicolinate reductase from Parasynechococcus marenigrum (strain WH8102).